Reading from the N-terminus, the 240-residue chain is Eukaryotic translation initiation factor 3 subunit K (240 aa).

The region spanning 41 to 221 (YDKDIVLTIL…TIKTRNIDEK (181 aa)) is the PCI domain.

Belongs to the eIF-3 subunit K family. As to quaternary structure, component of the eukaryotic translation initiation factor 3 (eIF-3) complex.

Its subcellular location is the cytoplasm. Component of the eukaryotic translation initiation factor 3 (eIF-3) complex, which is involved in protein synthesis of a specialized repertoire of mRNAs and, together with other initiation factors, stimulates binding of mRNA and methionyl-tRNAi to the 40S ribosome. The eIF-3 complex specifically targets and initiates translation of a subset of mRNAs involved in cell proliferation. The polypeptide is Eukaryotic translation initiation factor 3 subunit K (Caenorhabditis elegans).